The chain runs to 1321 residues: Probable serine/threonine-protein kinase fnkE (1321 aa).

FNIP repeat units follow at residues 108 to 149 (YNQL…NLSS), 150 to 191 (YNQP…DLSS), 192 to 233 (YNKL…DLSS), and 255 to 296 (YNKL…DISS). The Protein kinase 1 domain occupies 295–595 (SSYNQLLTPG…YNYVIKDSIM (301 aa)). ATP contacts are provided by residues 301–309 (LTPGTLSNN) and Lys325. Catalysis depends on Asp465, which acts as the Proton acceptor. FNIP repeat units follow at residues 654 to 696 (FNHP…FNKF) and 741 to 783 (FNQP…LGSN). A Protein kinase 2 domain is found at 860–1128 (WEIISTLGSG…EGDSVFEKYL (269 aa)). ATP-binding positions include 866–874 (LGSGNFGKV) and Lys895. Asp990 functions as the Proton acceptor in the catalytic mechanism. 2 FNIP repeats span residues 1160 to 1202 (YNQM…LGNE) and 1224 to 1268 (FNFT…LGSN).

The protein belongs to the protein kinase superfamily. STE Ser/Thr protein kinase family. Mg(2+) is required as a cofactor.

The enzyme catalyses L-seryl-[protein] + ATP = O-phospho-L-seryl-[protein] + ADP + H(+). It carries out the reaction L-threonyl-[protein] + ATP = O-phospho-L-threonyl-[protein] + ADP + H(+). The polypeptide is Probable serine/threonine-protein kinase fnkE (Dictyostelium discoideum (Social amoeba)).